We begin with the raw amino-acid sequence, 288 residues long: 4-diphosphocytidyl-2-C-methyl-D-erythritol kinase (288 aa).

Lys-8 is an active-site residue. 90 to 100 (PLEAGLAGGSA) provides a ligand contact to ATP. The active site involves Asp-132.

Belongs to the GHMP kinase family. IspE subfamily.

It catalyses the reaction 4-CDP-2-C-methyl-D-erythritol + ATP = 4-CDP-2-C-methyl-D-erythritol 2-phosphate + ADP + H(+). The protein operates within isoprenoid biosynthesis; isopentenyl diphosphate biosynthesis via DXP pathway; isopentenyl diphosphate from 1-deoxy-D-xylulose 5-phosphate: step 3/6. Its function is as follows. Catalyzes the phosphorylation of the position 2 hydroxy group of 4-diphosphocytidyl-2C-methyl-D-erythritol. The sequence is that of 4-diphosphocytidyl-2-C-methyl-D-erythritol kinase from Carboxydothermus hydrogenoformans (strain ATCC BAA-161 / DSM 6008 / Z-2901).